A 56-amino-acid polypeptide reads, in one-letter code: MAVPKRRMSRSNTRHRRAQWKASTPNLVPVTVDGVTLRVPRHLVPAYRRGLLRPEI.

Positions 1 to 19 are enriched in basic residues; it reads MAVPKRRMSRSNTRHRRAQ. A disordered region spans residues 1–22; that stretch reads MAVPKRRMSRSNTRHRRAQWKA.

Belongs to the bacterial ribosomal protein bL32 family.

The chain is Large ribosomal subunit protein bL32B (rpmF2) from Streptomyces coelicolor (strain ATCC BAA-471 / A3(2) / M145).